An 83-amino-acid polypeptide reads, in one-letter code: Molybdopterin synthase sulfur carrier subunit (83 aa).

Belongs to the MoaD family.

It participates in cofactor biosynthesis; molybdopterin biosynthesis. Involved in sulfur transfer in the conversion of molybdopterin precursor Z to molybdopterin. Probably plays a role in host phagosome maturation arrest. The polypeptide is Molybdopterin synthase sulfur carrier subunit (moaD1) (Mycobacterium tuberculosis (strain ATCC 25618 / H37Rv)).